The chain runs to 349 residues: Protein RecA (349 aa).

G64–T71 provides a ligand contact to ATP. The segment at N328 to K349 is disordered. Residues I331–K349 show a composition bias toward acidic residues.

It belongs to the RecA family.

The protein localises to the cytoplasm. Functionally, can catalyze the hydrolysis of ATP in the presence of single-stranded DNA, the ATP-dependent uptake of single-stranded DNA by duplex DNA, and the ATP-dependent hybridization of homologous single-stranded DNAs. It interacts with LexA causing its activation and leading to its autocatalytic cleavage. The sequence is that of Protein RecA from Halalkalibacterium halodurans (strain ATCC BAA-125 / DSM 18197 / FERM 7344 / JCM 9153 / C-125) (Bacillus halodurans).